The primary structure comprises 503 residues: Probable cytosol aminopeptidase (503 aa).

Positions 274 and 279 each coordinate Mn(2+). Lysine 286 is an active-site residue. 3 residues coordinate Mn(2+): aspartate 297, aspartate 356, and glutamate 358. The active site involves arginine 360.

It belongs to the peptidase M17 family. It depends on Mn(2+) as a cofactor.

It localises to the cytoplasm. It catalyses the reaction Release of an N-terminal amino acid, Xaa-|-Yaa-, in which Xaa is preferably Leu, but may be other amino acids including Pro although not Arg or Lys, and Yaa may be Pro. Amino acid amides and methyl esters are also readily hydrolyzed, but rates on arylamides are exceedingly low.. The catalysed reaction is Release of an N-terminal amino acid, preferentially leucine, but not glutamic or aspartic acids.. In terms of biological role, presumably involved in the processing and regular turnover of intracellular proteins. Catalyzes the removal of unsubstituted N-terminal amino acids from various peptides. The polypeptide is Probable cytosol aminopeptidase (Burkholderia pseudomallei (strain 1106a)).